Consider the following 232-residue polypeptide: MTEPKVIVALDFAKKEEALSFVDQVTPSDCRLKIGKEMFTYYGPQFVEQLVKKGFDVFLDLKFHDIPTTVAKAVKASAEMGVWMVNVHASGGRKMMEAARSALLPYGDKAPLLIAVTVLTSMEQSDLADIGLDIPPFEQVLRLATLTQQAGLDGVVCSAQEASVLKSRLGNEFKLITPGIRLDVSTKVDDQSRVMTPVDAIKAGADYLVIGRPVTQAAHPLDVLRKINLSLA.

Substrate contacts are provided by residues aspartate 11, lysine 33, 60–69 (DLKFHDIPTT), threonine 120, arginine 181, glutamine 191, glycine 211, and arginine 212. Lysine 62 serves as the catalytic Proton donor.

Belongs to the OMP decarboxylase family. Type 1 subfamily. Homodimer.

It catalyses the reaction orotidine 5'-phosphate + H(+) = UMP + CO2. The protein operates within pyrimidine metabolism; UMP biosynthesis via de novo pathway; UMP from orotate: step 2/2. Functionally, catalyzes the decarboxylation of orotidine 5'-monophosphate (OMP) to uridine 5'-monophosphate (UMP). This is Orotidine 5'-phosphate decarboxylase from Tolumonas auensis (strain DSM 9187 / NBRC 110442 / TA 4).